Reading from the N-terminus, the 362-residue chain is Chorismate synthase (362 aa).

R47 is a binding site for NADP(+). Residues 124 to 126 (RSS), G286, 301 to 305 (KPTAT), and R327 contribute to the FMN site.

Belongs to the chorismate synthase family. As to quaternary structure, homotetramer. FMNH2 is required as a cofactor.

The catalysed reaction is 5-O-(1-carboxyvinyl)-3-phosphoshikimate = chorismate + phosphate. It participates in metabolic intermediate biosynthesis; chorismate biosynthesis; chorismate from D-erythrose 4-phosphate and phosphoenolpyruvate: step 7/7. Its function is as follows. Catalyzes the anti-1,4-elimination of the C-3 phosphate and the C-6 proR hydrogen from 5-enolpyruvylshikimate-3-phosphate (EPSP) to yield chorismate, which is the branch point compound that serves as the starting substrate for the three terminal pathways of aromatic amino acid biosynthesis. This reaction introduces a second double bond into the aromatic ring system. This chain is Chorismate synthase, found in Nostoc punctiforme (strain ATCC 29133 / PCC 73102).